Consider the following 725-residue polypeptide: Ribosomal RNA large subunit methyltransferase K/L (725 aa).

Positions Val46 to Leu157 constitute a THUMP domain.

The protein belongs to the methyltransferase superfamily. RlmKL family.

The protein resides in the cytoplasm. It carries out the reaction guanosine(2445) in 23S rRNA + S-adenosyl-L-methionine = N(2)-methylguanosine(2445) in 23S rRNA + S-adenosyl-L-homocysteine + H(+). The enzyme catalyses guanosine(2069) in 23S rRNA + S-adenosyl-L-methionine = N(2)-methylguanosine(2069) in 23S rRNA + S-adenosyl-L-homocysteine + H(+). Its function is as follows. Specifically methylates the guanine in position 2445 (m2G2445) and the guanine in position 2069 (m7G2069) of 23S rRNA. The protein is Ribosomal RNA large subunit methyltransferase K/L of Ectopseudomonas mendocina (strain ymp) (Pseudomonas mendocina).